Reading from the N-terminus, the 435-residue chain is Gamma-glutamyl phosphate reductase (435 aa).

Belongs to the gamma-glutamyl phosphate reductase family.

It localises to the cytoplasm. The catalysed reaction is L-glutamate 5-semialdehyde + phosphate + NADP(+) = L-glutamyl 5-phosphate + NADPH + H(+). The protein operates within amino-acid biosynthesis; L-proline biosynthesis; L-glutamate 5-semialdehyde from L-glutamate: step 2/2. In terms of biological role, catalyzes the NADPH-dependent reduction of L-glutamate 5-phosphate into L-glutamate 5-semialdehyde and phosphate. The product spontaneously undergoes cyclization to form 1-pyrroline-5-carboxylate. The polypeptide is Gamma-glutamyl phosphate reductase (Nostoc punctiforme (strain ATCC 29133 / PCC 73102)).